Here is a 589-residue protein sequence, read N- to C-terminus: Aspartate--tRNA ligase 2 (589 aa).

L-aspartate is bound at residue glutamate 174. The interval 198–201 (QITK) is aspartate. Arginine 220 is a binding site for L-aspartate. Residues 220 to 222 (RDE) and glutamine 229 each bind ATP. Residue histidine 443 participates in L-aspartate binding. An ATP-binding site is contributed by glutamate 477. Arginine 484 provides a ligand contact to L-aspartate. 529–532 (GLDR) lines the ATP pocket.

This sequence belongs to the class-II aminoacyl-tRNA synthetase family. Type 1 subfamily. In terms of assembly, homodimer.

The protein localises to the cytoplasm. It catalyses the reaction tRNA(Asp) + L-aspartate + ATP = L-aspartyl-tRNA(Asp) + AMP + diphosphate. Catalyzes the attachment of L-aspartate to tRNA(Asp) in a two-step reaction: L-aspartate is first activated by ATP to form Asp-AMP and then transferred to the acceptor end of tRNA(Asp). This Streptococcus mutans serotype c (strain ATCC 700610 / UA159) protein is Aspartate--tRNA ligase 2.